The sequence spans 657 residues: Protein mono-ADP-ribosyltransferase TIPARP (657 aa).

A compositionally biased stretch (acidic residues) spans 1–10; that stretch reads MEVETTEPEP. The disordered stretch occupies residues 1–22; it reads MEVETTEPEPDCVVQPPSPSDD. Residue C39 is modified to ADP-ribosylcysteine. Residues 41-48 carry the Nuclear localization signal motif; it reads KKKQEQKR. The interval 121 to 154 is disordered; it reads QLPEAHPSTDAPEQGVPIQDHSFPPETISGTVAD. A C3H1-type zinc finger spans residues 238–265; sequence ENGIEICMDFLQGTCIYGRDCLKHHTVL. The 79-residue stretch at 333–411 folds into the WWE domain; that stretch reads STPPCSNSNS…RRPLFRSCFI (79 aa). Positions 449–657 constitute a PARP catalytic domain; the sequence is YPETWVYMHP…YEEVSNTVSI (209 aa).

The protein belongs to the ARTD/PARP family. As to quaternary structure, interacts with AHR. In terms of processing, auto-mono-ADP-ribosylated. Ubiquitously expressed.

It localises to the nucleus. The enzyme catalyses L-aspartyl-[protein] + NAD(+) = 4-O-(ADP-D-ribosyl)-L-aspartyl-[protein] + nicotinamide. The catalysed reaction is L-glutamyl-[protein] + NAD(+) = 5-O-(ADP-D-ribosyl)-L-glutamyl-[protein] + nicotinamide. It catalyses the reaction L-cysteinyl-[protein] + NAD(+) = S-(ADP-D-ribosyl)-L-cysteinyl-[protein] + nicotinamide + H(+). In terms of biological role, ADP-ribosyltransferase that mediates mono-ADP-ribosylation of glutamate, aspartate and cysteine residues on target proteins. Acts as a negative regulator of AHR by mediating mono-ADP-ribosylation of AHR, leading to inhibit transcription activator activity of AHR. The sequence is that of Protein mono-ADP-ribosyltransferase TIPARP from Mus musculus (Mouse).